Reading from the N-terminus, the 383-residue chain is TOM1-like protein 2 (383 aa).

The VHS domain maps to 45–178 (ATLETLEEPN…GLHARGEENS (134 aa)). In terms of domain architecture, GAT spans 223-310 (LSIKDKKEQI…VLSSYKKPDE (88 aa)). A disordered region spans residues 305 to 383 (YKKPDETEKK…LGLSSDEDEK (79 aa)). Basic and acidic residues-rich tracts occupy residues 306 to 316 (KKPDETEKKAS) and 339 to 354 (EPVK…KHSE). Phosphoserine occurs at positions 377 and 378.

This sequence belongs to the TOM1 family. Ubiquitously expressed.

The protein localises to the cytoplasm. Its subcellular location is the membrane. Binds ubiquitin in vitro. Might contribute to the loading of the ESCRT machinery. This is TOM1-like protein 2 from Arabidopsis thaliana (Mouse-ear cress).